Consider the following 96-residue polypeptide: Co-chaperonin GroES (96 aa).

Belongs to the GroES chaperonin family. Heptamer of 7 subunits arranged in a ring. Interacts with the chaperonin GroEL.

It localises to the cytoplasm. In terms of biological role, together with the chaperonin GroEL, plays an essential role in assisting protein folding. The GroEL-GroES system forms a nano-cage that allows encapsulation of the non-native substrate proteins and provides a physical environment optimized to promote and accelerate protein folding. GroES binds to the apical surface of the GroEL ring, thereby capping the opening of the GroEL channel. The polypeptide is Co-chaperonin GroES (Paraburkholderia phytofirmans (strain DSM 17436 / LMG 22146 / PsJN) (Burkholderia phytofirmans)).